The sequence spans 257 residues: Aspartate/glutamate leucyltransferase (257 aa).

It belongs to the R-transferase family. Bpt subfamily.

It is found in the cytoplasm. The enzyme catalyses N-terminal L-glutamyl-[protein] + L-leucyl-tRNA(Leu) = N-terminal L-leucyl-L-glutamyl-[protein] + tRNA(Leu) + H(+). It carries out the reaction N-terminal L-aspartyl-[protein] + L-leucyl-tRNA(Leu) = N-terminal L-leucyl-L-aspartyl-[protein] + tRNA(Leu) + H(+). Functionally, functions in the N-end rule pathway of protein degradation where it conjugates Leu from its aminoacyl-tRNA to the N-termini of proteins containing an N-terminal aspartate or glutamate. This is Aspartate/glutamate leucyltransferase from Rhodopseudomonas palustris (strain HaA2).